The primary structure comprises 282 residues: Large ribosomal subunit protein uL4c (282 aa).

Residues Met1 to Ser49 constitute a chloroplast transit peptide. The disordered stretch occupies residues Glu106 to Val138.

This sequence belongs to the universal ribosomal protein uL4 family. In terms of assembly, part of the 50S ribosomal subunit.

It is found in the plastid. The protein resides in the chloroplast. Functionally, this protein binds directly and specifically to 23S rRNA. May play a role in plastid transcriptional regulation. The protein is Large ribosomal subunit protein uL4c (RPL4) of Arabidopsis thaliana (Mouse-ear cress).